The following is a 1416-amino-acid chain: DNA-directed RNA polymerase subunit beta' (1416 aa).

Residues C71, C73, C86, and C89 each coordinate Zn(2+). The Mg(2+) site is built by D461, D463, and D465. 4 residues coordinate Zn(2+): C815, C892, C899, and C902.

The protein belongs to the RNA polymerase beta' chain family. The RNAP catalytic core consists of 2 alpha, 1 beta, 1 beta' and 1 omega subunit. When a sigma factor is associated with the core the holoenzyme is formed, which can initiate transcription. Requires Mg(2+) as cofactor. The cofactor is Zn(2+).

The enzyme catalyses RNA(n) + a ribonucleoside 5'-triphosphate = RNA(n+1) + diphosphate. DNA-dependent RNA polymerase catalyzes the transcription of DNA into RNA using the four ribonucleoside triphosphates as substrates. The chain is DNA-directed RNA polymerase subunit beta' from Blochmanniella pennsylvanica (strain BPEN).